Consider the following 1397-residue polypeptide: DNA-directed RNA polymerase subunit beta' (1397 aa).

4 residues coordinate Zn(2+): Cys-75, Cys-77, Cys-90, and Cys-93. Asp-465, Asp-467, and Asp-469 together coordinate Mg(2+). Cys-819, Cys-893, Cys-900, and Cys-903 together coordinate Zn(2+).

The protein belongs to the RNA polymerase beta' chain family. In terms of assembly, the RNAP catalytic core consists of 2 alpha, 1 beta, 1 beta' and 1 omega subunit. When a sigma factor is associated with the core the holoenzyme is formed, which can initiate transcription. Requires Mg(2+) as cofactor. The cofactor is Zn(2+).

The enzyme catalyses RNA(n) + a ribonucleoside 5'-triphosphate = RNA(n+1) + diphosphate. Functionally, DNA-dependent RNA polymerase catalyzes the transcription of DNA into RNA using the four ribonucleoside triphosphates as substrates. The sequence is that of DNA-directed RNA polymerase subunit beta' from Acinetobacter baylyi (strain ATCC 33305 / BD413 / ADP1).